The following is a 47-amino-acid chain: Large ribosomal subunit protein bL34 (47 aa).

It belongs to the bacterial ribosomal protein bL34 family.

The protein is Large ribosomal subunit protein bL34 of Mycobacterium avium (strain 104).